Reading from the N-terminus, the 223-residue chain is Uracil-DNA glycosylase (223 aa).

Asp61 serves as the catalytic Proton acceptor.

Belongs to the uracil-DNA glycosylase (UDG) superfamily. UNG family.

Its subcellular location is the cytoplasm. The catalysed reaction is Hydrolyzes single-stranded DNA or mismatched double-stranded DNA and polynucleotides, releasing free uracil.. Excises uracil residues from the DNA which can arise as a result of misincorporation of dUMP residues by DNA polymerase or due to deamination of cytosine. This Tolumonas auensis (strain DSM 9187 / NBRC 110442 / TA 4) protein is Uracil-DNA glycosylase.